The chain runs to 165 residues: SPbeta prophage-derived uncharacterized protein YorR (165 aa).

This Bacillus subtilis (strain 168) protein is SPbeta prophage-derived uncharacterized protein YorR (yorR).